We begin with the raw amino-acid sequence, 2969 residues long: Histone-lysine N-methyltransferase ASH1L (2969 aa).

Disordered regions lie at residues 1–70 (MDPR…TDAQ) and 118–143 (HPRK…RDPS). The span at 21–31 (KSPSAISTGTL) shows a compositional bias: polar residues. At serine 22 the chain carries Phosphoserine. Basic and acidic residues-rich tracts occupy residues 33–65 (SKRE…KDDG) and 127–143 (KMTD…RDPS). A Glycyl lysine isopeptide (Lys-Gly) (interchain with G-Cter in SUMO2) cross-link involves residue lysine 34. Lysine 375 bears the N6-acetyllysine mark. Residue lysine 425 forms a Glycyl lysine isopeptide (Lys-Gly) (interchain with G-Cter in SUMO2) linkage. The span at 501-511 (IQQDSFSSSEK) shows a compositional bias: polar residues. Disordered stretches follow at residues 501–525 (IQQD…QPPV), 537–583 (ASDV…PNPL), 824–845 (YKPK…PPKR), 878–966 (KQGL…EMEP), 1100–1128 (SEIL…AGFV), 1151–1231 (MKKA…EHVS), and 1243–1281 (SLKE…QLRN). Basic and acidic residues predominate over residues 512–522 (GSYETSKHEKQ). A compositionally biased stretch (polar residues) spans 554–579 (NLPSPSPTVSVNPLTRSPPETSSQLA). Residues 887–897 (PKKRGRPKRQM) are compositionally biased toward basic residues. Positions 887-899 (PKKRGRPKRQMRS) form a DNA-binding region, a.T hook 1. Positions 920-932 (SKLESESDNHRSS) are enriched in basic and acidic residues. The span at 936–949 (FESEDQLQDPDDLD) shows a compositional bias: acidic residues. 2 stretches are compositionally biased toward low complexity: residues 1100–1123 (SEIL…PVSS) and 1162–1175 (SPPT…SHLS). A phosphoserine mark is found at serine 1162 and serine 1170. The segment covering 1186–1211 (SPISESHSDETIPSDSGIGTDNNSTS) has biased composition (polar residues). Residue glutamine 1220 is modified to N5-methylglutamine. 2 stretches are compositionally biased toward basic residues: residues 1246 to 1256 (EKHKHKCKRRN) and 1266 to 1277 (KRQKRKRKKKYP). The segment at residues 1347–1359 (KKKRGRPPKMREA) is a DNA-binding region (a.T hook 2). 3 disordered regions span residues 1489–1508 (HREH…GSSR), 1580–1711 (SESS…ASGD), and 1741–1761 (ASAP…TLGK). Polar residues-rich tracts occupy residues 1496 to 1508 (EQPQ…GSSR), 1580 to 1598 (SESS…SEPA), 1605 to 1622 (NLFT…PNSS), and 1650 to 1680 (LPSN…STNC). Residues 1741–1751 (ASAPPSSSPGR) show a composition bias toward low complexity. A DNA-binding region (a.T hook 3) is located at residues 1847-1859 (KRRPGRPRKCPLQ). Residues 1911–1991 (KKGLKRKGWL…PRPPKKKYQK (81 aa)) form a disordered region. A catalytic domain region spans residues 2069 to 2288 (PDVPLYKKIR…KCRGIIGGKS (220 aa)). Positions 2091-2142 (YEATTCNCKKPDDDTRKGCVDDCLNRMIFAECSPNTCPCGEQCCNQRIQRHE) constitute an AWS domain. Positions 2145–2261 (QCLERFRAEE…AGTELTYDYN (117 aa)) constitute an SET domain. The Post-SET domain maps to 2269–2285 (KQQLCKCGFEKCRGIIG). A disordered region spans residues 2288–2346 (SQRVNGLTSSKNSQPMATHKKSGRSKEKRKSKHKLKKRRGHLSEEPSENINTPTRLTPQ). The span at 2289 to 2303 (QRVNGLTSSKNSQPM) shows a compositional bias: polar residues. Positions 2305 to 2327 (THKKSGRSKEKRKSKHKLKKRRG) are enriched in basic residues. 3 positions are modified to N6-acetyllysine: lysine 2317, lysine 2319, and lysine 2323. A compositionally biased stretch (polar residues) spans 2335 to 2346 (ENINTPTRLTPQ). The 107-residue stretch at 2444–2550 (RLAQIFKEIC…KAYYNARHEA (107 aa)) folds into the Bromo domain. The PHD-type zinc finger occupies 2585–2631 (VIRCICGLYKDEGLMIQCDKCMVWQHCDCMGVNSDVEHYLCEQCDPR). A BAH domain is found at 2661 to 2798 (LLLRQGDCVY…KSAHLFYKIH (138 aa)). Disordered stretches follow at residues 2825 to 2856 (SPHY…DLGQ) and 2876 to 2919 (NEIP…RRHN). Positions 2842–2855 (WKSERSKPPLKDLG) are enriched in basic and acidic residues.

Belongs to the class V-like SAM-binding methyltransferase superfamily. Histone-lysine methyltransferase family. SET2 subfamily. Post-translationally, methylated at Gln-1220 by N6AMT1. As to expression, widely expressed, with highest level in brain, heart and kidney.

It is found in the nucleus. The protein resides in the cell junction. The protein localises to the tight junction. It localises to the chromosome. The enzyme catalyses L-lysyl(36)-[histone H3] + 3 S-adenosyl-L-methionine = N(6),N(6),N(6)-trimethyl-L-lysyl(36)-[histone H3] + 3 S-adenosyl-L-homocysteine + 3 H(+). The catalysed reaction is L-lysyl(9)-[histone H3] + S-adenosyl-L-methionine = N(6)-methyl-L-lysyl(9)-[histone H3] + S-adenosyl-L-homocysteine + H(+). Its function is as follows. Histone methyltransferase specifically trimethylating 'Lys-36' of histone H3 forming H3K36me3. Also monomethylates 'Lys-9' of histone H3 (H3K9me1) in vitro. The physiological significance of the H3K9me1 activity is unclear. This is Histone-lysine N-methyltransferase ASH1L (ASH1L) from Homo sapiens (Human).